The sequence spans 155 residues: Transcriptional repressor NrdR (155 aa).

A zinc finger spans residues 3 to 34; it reads CPFCAANDTKVIDSRLVAEGDQVRRRRECVAC. The region spanning 49-139 is the ATP-cone domain; sequence PRLIKQDGSR…VYRRFQDLNE (91 aa).

It belongs to the NrdR family. Requires Zn(2+) as cofactor.

In terms of biological role, negatively regulates transcription of bacterial ribonucleotide reductase nrd genes and operons by binding to NrdR-boxes. This chain is Transcriptional repressor NrdR, found in Ectopseudomonas mendocina (strain ymp) (Pseudomonas mendocina).